Here is a 131-residue protein sequence, read N- to C-terminus: Translation initiation factor 5A (131 aa).

A Hypusine modification is found at lysine 36.

The protein belongs to the eIF-5A family.

The protein resides in the cytoplasm. Functionally, functions by promoting the formation of the first peptide bond. This Saccharolobus solfataricus (strain ATCC 35092 / DSM 1617 / JCM 11322 / P2) (Sulfolobus solfataricus) protein is Translation initiation factor 5A.